We begin with the raw amino-acid sequence, 137 residues long: Small ribosomal subunit protein eS6 (137 aa).

The span at 114–127 (LPVEEAPAEDAPES) shows a compositional bias: acidic residues. Residues 114–137 (LPVEEAPAEDAPESAEEKSEDKKE) form a disordered region. Basic and acidic residues predominate over residues 128 to 137 (AEEKSEDKKE).

It belongs to the eukaryotic ribosomal protein eS6 family.

The protein is Small ribosomal subunit protein eS6 of Nitrosopumilus maritimus (strain SCM1).